Consider the following 1433-residue polypeptide: Inositol hexakisphosphate and diphosphoinositol-pentakisphosphate kinase 1 (1433 aa).

64–65 contacts substrate; sequence KK. ATP-binding positions include Arg145, Lys198, His205, Arg224, 248 to 251, and 257 to 259; these read EEFM and DVK. 224-225 serves as a coordination point for substrate; it reads RK. Substrate contacts are provided by Lys259 and Arg273. Residues Ser275, Asp320, and 332–334 contribute to the ATP site; that span reads DVN. 337–340 provides a ligand contact to substrate; the sequence is SFVK. Residues 382–453 are polyphosphoinositide-binding domain; sequence PTTSGTMMEL…VLDITRLLLA (72 aa). The interval 915-1020 is disordered; it reads GVEEEGSAPA…PTEMKQSGLG (106 aa). Phosphoserine is present on residues Ser944 and Ser987. Positions 1005-1020 are enriched in polar residues; the sequence is FSSSRPPTEMKQSGLG. Residues Ser1037 and Ser1073 each carry the phosphoserine modification. Residues 1134–1143 show a composition bias toward polar residues; that stretch reads MHSSQASDNP. Disordered stretches follow at residues 1134–1199 and 1235–1257; these read MHSS…DQPS and EPNQ…VSQP. Phosphoserine is present on residues Ser1145 and Ser1152. Positions 1168–1186 are enriched in low complexity; that stretch reads SSGPSSTVSSAGPSSPTTV. 2 stretches are compositionally biased toward polar residues: residues 1187 to 1199 and 1236 to 1250; these read DGNS…DQPS and PNQS…TSQP.

Belongs to the histidine acid phosphatase family. VIP1 subfamily. Widely expressed, with a higher expression in skeletal muscle, heart and brain.

The protein resides in the cytoplasm. It localises to the cytosol. Its subcellular location is the cell membrane. The catalysed reaction is 1D-myo-inositol hexakisphosphate + ATP = 1-diphospho-1D-myo-inositol 2,3,4,5,6-pentakisphosphate + ADP. It carries out the reaction 5-diphospho-1D-myo-inositol 1,2,3,4,6-pentakisphosphate + ATP + H(+) = 1,5-bis(diphospho)-1D-myo-inositol 2,3,4,6-tetrakisphosphate + ADP. Bifunctional inositol kinase that acts in concert with the IP6K kinases IP6K1, IP6K2 and IP6K3 to synthesize the diphosphate group-containing inositol pyrophosphates diphosphoinositol pentakisphosphate, PP-InsP5, and bis-diphosphoinositol tetrakisphosphate, (PP)2-InsP4. PP-InsP5 and (PP)2-InsP4, also respectively called InsP7 and InsP8, regulate a variety of cellular processes, including apoptosis, vesicle trafficking, cytoskeletal dynamics, exocytosis, insulin signaling and neutrophil activation. Phosphorylates inositol hexakisphosphate (InsP6) at position 1 to produce PP-InsP5 which is in turn phosphorylated by IP6Ks to produce (PP)2-InsP4. Alternatively, phosphorylates PP-InsP5 at position 1, produced by IP6Ks from InsP6, to produce (PP)2-InsP4. Activated when cells are exposed to hyperosmotic stress. The chain is Inositol hexakisphosphate and diphosphoinositol-pentakisphosphate kinase 1 from Homo sapiens (Human).